A 394-amino-acid chain; its full sequence is Phosphopentomutase (394 aa).

Positions 13, 286, 291, 327, 328, and 339 each coordinate Mn(2+).

It belongs to the phosphopentomutase family. The cofactor is Mn(2+).

The protein localises to the cytoplasm. It catalyses the reaction 2-deoxy-alpha-D-ribose 1-phosphate = 2-deoxy-D-ribose 5-phosphate. The enzyme catalyses alpha-D-ribose 1-phosphate = D-ribose 5-phosphate. It functions in the pathway carbohydrate degradation; 2-deoxy-D-ribose 1-phosphate degradation; D-glyceraldehyde 3-phosphate and acetaldehyde from 2-deoxy-alpha-D-ribose 1-phosphate: step 1/2. In terms of biological role, isomerase that catalyzes the conversion of deoxy-ribose 1-phosphate (dRib-1-P) and ribose 1-phosphate (Rib-1-P) to deoxy-ribose 5-phosphate (dRib-5-P) and ribose 5-phosphate (Rib-5-P), respectively. This Bacillus cereus (strain B4264) protein is Phosphopentomutase.